We begin with the raw amino-acid sequence, 357 residues long: Dihydroorotate dehydrogenase (quinone) (357 aa).

FMN contacts are provided by residues 66–70 and threonine 90; that span reads AGFDK. Residue lysine 70 coordinates substrate. 115 to 119 is a substrate binding site; it reads NRMGF. Residues asparagine 143 and asparagine 176 each contribute to the FMN site. Asparagine 176 provides a ligand contact to substrate. Serine 179 serves as the catalytic Nucleophile. A substrate-binding site is contributed by asparagine 181. Positions 212 and 240 each coordinate FMN. Residue 241 to 242 coordinates substrate; the sequence is NT. FMN is bound by residues glycine 264, glycine 293, and 314–315; that span reads YT.

The protein belongs to the dihydroorotate dehydrogenase family. Type 2 subfamily. As to quaternary structure, monomer. The cofactor is FMN.

It is found in the cell membrane. The enzyme catalyses (S)-dihydroorotate + a quinone = orotate + a quinol. It functions in the pathway pyrimidine metabolism; UMP biosynthesis via de novo pathway; orotate from (S)-dihydroorotate (quinone route): step 1/1. Catalyzes the conversion of dihydroorotate to orotate with quinone as electron acceptor. This is Dihydroorotate dehydrogenase (quinone) from Mycobacterium tuberculosis (strain ATCC 25177 / H37Ra).